A 321-amino-acid polypeptide reads, in one-letter code: DNA-directed RNA polymerase subunit alpha (321 aa).

The segment at 1–235 (MAYQIECLET…DLFSPLKEVP (235 aa)) is alpha N-terminal domain (alpha-NTD). Residues 252–321 (QIPIEQLNLS…TLPPQKAARN (70 aa)) form an alpha C-terminal domain (alpha-CTD) region.

It belongs to the RNA polymerase alpha chain family. Homodimer. In cyanobacteria the RNAP catalytic core is composed of 2 alpha, 1 beta, 1 beta', 1 gamma and 1 omega subunit. When a sigma factor is associated with the core the holoenzyme is formed, which can initiate transcription.

The catalysed reaction is RNA(n) + a ribonucleoside 5'-triphosphate = RNA(n+1) + diphosphate. Functionally, DNA-dependent RNA polymerase catalyzes the transcription of DNA into RNA using the four ribonucleoside triphosphates as substrates. This chain is DNA-directed RNA polymerase subunit alpha, found in Thermosynechococcus vestitus (strain NIES-2133 / IAM M-273 / BP-1).